The following is a 97-amino-acid chain: Large ribosomal subunit protein eL21 (97 aa).

It belongs to the eukaryotic ribosomal protein eL21 family.

This Methanosarcina mazei (strain ATCC BAA-159 / DSM 3647 / Goe1 / Go1 / JCM 11833 / OCM 88) (Methanosarcina frisia) protein is Large ribosomal subunit protein eL21.